A 347-amino-acid polypeptide reads, in one-letter code: FK506-binding protein-like (347 aa).

Residues 1 to 24 (METSPISPMNEKNTAQPQQREENA) form a disordered region. Thr-3 is modified (phosphothreonine). 3 TPR repeats span residues 208–241 (AKEE…LLTL), 250–283 (TTLY…EPGH), and 284–317 (LKAL…DPKN).

As to quaternary structure, forms a ternary complex with CDKN1A/p21 and HSP90AB1/Hsp90.

Functionally, may be involved in response to X-ray. Regulates p21 protein stability by binding to Hsp90 and p21. In Mus musculus (Mouse), this protein is FK506-binding protein-like (Fkbpl).